A 367-amino-acid polypeptide reads, in one-letter code: Probable butyrate kinase (367 aa).

Belongs to the acetokinase family.

It is found in the cytoplasm. It carries out the reaction butanoate + ATP = butanoyl phosphate + ADP. This Bacillus cereus (strain Q1) protein is Probable butyrate kinase.